Here is a 194-residue protein sequence, read N- to C-terminus: dCTP deaminase (194 aa).

Residues 110–115, D128, 136–138, Y171, K178, and Q182 contribute to the dCTP site; these read RSSLAR and VLE. E138 acts as the Proton donor/acceptor in catalysis.

It belongs to the dCTP deaminase family. Homotrimer.

It carries out the reaction dCTP + H2O + H(+) = dUTP + NH4(+). Its pathway is pyrimidine metabolism; dUMP biosynthesis; dUMP from dCTP (dUTP route): step 1/2. Functionally, catalyzes the deamination of dCTP to dUTP. The chain is dCTP deaminase from Psychromonas ingrahamii (strain DSM 17664 / CCUG 51855 / 37).